The chain runs to 349 residues: Leukotriene B4 receptor 1 (349 aa).

Over 1-19 (MNTTSPAAPSSSGVSFISL) the chain is Extracellular. Asn2 carries an N-linked (GlcNAc...) asparagine glycan. Residues 20–42 (LVIIVLSVALAVGLPGNSFVVWS) traverse the membrane as a helical segment. The Cytoplasmic portion of the chain corresponds to 43–54 (ILAKLRKRSVTA). Residues 55–75 (LMVLHLALADLAVLLTAPFFL) form a helical membrane-spanning segment. Residues 76 to 91 (YSVAQGTWTFGLSSCR) lie on the Extracellular side of the membrane. A helical transmembrane segment spans residues 92–113 (LFHYVCGVSMYASVLLIMTMSL). Over 114–138 (DRSLAVALPFVSQKLRTKAVAWRVL) the chain is Cytoplasmic. A helical transmembrane segment spans residues 139-159 (AGIWVMSVLLATPVLLYRTVH). Over 160-179 (LGLNNRSLTCFLKYPSERHR) the chain is Extracellular. Residue Asn164 is glycosylated (N-linked (GlcNAc...) asparagine). The chain crosses the membrane as a helical span at residues 180–200 (AFHLFFEVITGFLLPFLVVVA). At 201 to 222 (SYCDIGRRLRARRFRRSRRTGR) the chain is on the cytoplasmic side. A helical membrane pass occupies residues 223 to 243 (LVALIILAFAAFWLPYHVVNL). The Extracellular portion of the chain corresponds to 244 to 269 (AEGFRAAAGKALGSGPVGRRLLLARH). Residues 270–290 (VLITLAFLSSSVNPLLYACAG) form a helical membrane-spanning segment. At 291–349 (GGLLRSAGVGFIAKLLEGTGSETSSSRRKGTLAQTLRGTPASPEPDPAESLTASTNPLE) the chain is on the cytoplasmic side. Positions 311–349 (SETSSSRRKGTLAQTLRGTPASPEPDPAESLTASTNPLE) are disordered.

Belongs to the G-protein coupled receptor 1 family. In terms of processing, phosphorylated by GRK6 upon leukotriene B4 binding; which promotes desensitization.

It localises to the cell membrane. Its function is as follows. Receptor for extracellular ATP &gt; UTP and ADP. The activity of this receptor is mediated by G proteins which activate a phosphatidylinositol-calcium second messenger system. May be the cardiac P2Y receptor involved in the regulation of cardiac muscle contraction through modulation of L-type calcium currents. Is a receptor for leukotriene B4, a potent chemoattractant involved in inflammation and immune response. The chain is Leukotriene B4 receptor 1 (LTB4R) from Bos taurus (Bovine).